The chain runs to 146 residues: Hemoglobin subunit beta (146 aa).

Residues 2 to 146 (HWSAEEKQLI…VAHALARKYH (145 aa)) enclose the Globin domain. Positions 63 and 92 each coordinate heme b.

This sequence belongs to the globin family. Heterotetramer of two alpha chains and two beta chains. In terms of tissue distribution, red blood cells.

Functionally, involved in oxygen transport from the lung to the various peripheral tissues. This Phoenicopterus ruber (American flamingo) protein is Hemoglobin subunit beta (HBB).